The primary structure comprises 142 residues: Large ribosomal subunit protein uL13 (142 aa).

Belongs to the universal ribosomal protein uL13 family. Part of the 50S ribosomal subunit.

This protein is one of the early assembly proteins of the 50S ribosomal subunit, although it is not seen to bind rRNA by itself. It is important during the early stages of 50S assembly. This Cronobacter sakazakii (strain ATCC BAA-894) (Enterobacter sakazakii) protein is Large ribosomal subunit protein uL13.